Consider the following 249-residue polypeptide: UPF0524 protein C3orf70 homolog B (249 aa).

A disordered region spans residues 174–230; it reads GPKMGHCSSPSTSEDSGINALGGHFLESCEEESEEEDELSTDGHSSPGSLWDQDECT. The segment covering 201–213 has biased composition (acidic residues); that stretch reads SCEEESEEEDELS.

The protein belongs to the UPF0524 family.

Plays a role in neuronal and neurobehavioral development. Required for normal expression of the postmitotic and mature neuron markers elavl3 and eno2 and neurobehaviors related to circadian rhythm and altered light-dark conditions. In Danio rerio (Zebrafish), this protein is UPF0524 protein C3orf70 homolog B.